The following is a 236-amino-acid chain: 2-C-methyl-D-erythritol 4-phosphate cytidylyltransferase (236 aa).

It belongs to the IspD/TarI cytidylyltransferase family. IspD subfamily. As to quaternary structure, homodimer.

It carries out the reaction 2-C-methyl-D-erythritol 4-phosphate + CTP + H(+) = 4-CDP-2-C-methyl-D-erythritol + diphosphate. It functions in the pathway isoprenoid biosynthesis; isopentenyl diphosphate biosynthesis via DXP pathway; isopentenyl diphosphate from 1-deoxy-D-xylulose 5-phosphate: step 2/6. Catalyzes the formation of 4-diphosphocytidyl-2-C-methyl-D-erythritol from CTP and 2-C-methyl-D-erythritol 4-phosphate (MEP). In Escherichia coli O157:H7, this protein is 2-C-methyl-D-erythritol 4-phosphate cytidylyltransferase.